Consider the following 196-residue polypeptide: Peptidyl-tRNA hydrolase (196 aa).

Tyrosine 17 lines the tRNA pocket. Histidine 22 functions as the Proton acceptor in the catalytic mechanism. TRNA contacts are provided by phenylalanine 68, asparagine 70, and asparagine 116.

This sequence belongs to the PTH family. Monomer.

The protein resides in the cytoplasm. It catalyses the reaction an N-acyl-L-alpha-aminoacyl-tRNA + H2O = an N-acyl-L-amino acid + a tRNA + H(+). Its function is as follows. Hydrolyzes ribosome-free peptidyl-tRNAs (with 1 or more amino acids incorporated), which drop off the ribosome during protein synthesis, or as a result of ribosome stalling. Functionally, catalyzes the release of premature peptidyl moieties from peptidyl-tRNA molecules trapped in stalled 50S ribosomal subunits, and thus maintains levels of free tRNAs and 50S ribosomes. The protein is Peptidyl-tRNA hydrolase of Yersinia pseudotuberculosis serotype O:1b (strain IP 31758).